Consider the following 380-residue polypeptide: Cytochrome b (380 aa).

Transmembrane regions (helical) follow at residues 33–53 (FGSL…FLAM), 77–98 (WLLR…YLHI), 113–133 (WNIG…GYVL), and 178–198 (FFTF…LHLL). The heme b site is built by His-83 and His-97. The heme b site is built by His-182 and His-196. Residue His-201 coordinates a ubiquinone. 4 helical membrane-spanning segments follow: residues 226-246 (YKDL…ALLN), 288-308 (LGGV…PVLH), 320-340 (PSQT…WIGG), and 347-367 (FIII…ILIP).

Belongs to the cytochrome b family. As to quaternary structure, the cytochrome bc1 complex contains 3 respiratory subunits (MT-CYB, CYC1 and UQCRFS1), 2 core proteins (UQCRC1 and UQCRC2) and probably 6 low-molecular weight proteins. Requires heme b as cofactor.

Its subcellular location is the mitochondrion inner membrane. In terms of biological role, component of the ubiquinol-cytochrome c reductase complex (complex III or cytochrome b-c1 complex) that is part of the mitochondrial respiratory chain. The b-c1 complex mediates electron transfer from ubiquinol to cytochrome c. Contributes to the generation of a proton gradient across the mitochondrial membrane that is then used for ATP synthesis. This Atractosteus spatula (Alligator gar) protein is Cytochrome b (mt-cyb).